Consider the following 254-residue polypeptide: MKSFIFRQNPRKQQQEQNNLVDYSDSDDDEECNDDIFVNNEIIINVSEKSSKDYGLFIWDGSLVLSWYLFTLTKNNPQFWNGKNVLELNAGVALPSILLSKLGVNKIIITDRIDGFIEIQNNIIDNLNLNGFNINNNNNINDNKIFIEPLSWGNFEKFSNQLTSSSIDYLITSDCFYDNTKNYDDIFATWYYFLLKNDKLVILLTYQVRCNEKTIFNYLKKWKLKSEILSIKDISIPNYNIDSEIILIKITKNQ.

The disordered stretch occupies residues 1–27; sequence MKSFIFRQNPRKQQQEQNNLVDYSDSD. Residues 11 to 21 show a composition bias toward polar residues; it reads RKQQQEQNNLV.

Belongs to the methyltransferase superfamily. METTL23 family.

Functionally, probable methyltransferase. This is Methyltransferase-like protein 23 from Dictyostelium discoideum (Social amoeba).